A 311-amino-acid chain; its full sequence is MEVIKISPRGYCYGVVDAMVLALRTAQNFDLPRPIHILGMIVHNAHVVEAFEKQGIKTLDGEDRLALLDQVQEGTIIFTAHGVSPEVRKKARDKGLTVVDATCPDVTKTHDLIREKVAEGYHVLYIGKKGHPEPEGAMGIAPDHVHLVQKLEELEALDLPTDKLIVTNQTTMSQWDVKHLMDAILKRFPGVEVHNEICLATQVRQEAVAEQVGEADLCIVVGDPRSNNSNRLAQVSEEIADVPSYRIADLFELDIEWLRGKKNVAVTSGASTPTPLTKEVITFLEQFDEFNPATWEKKRTVNMAKILPTVK.

Residue Cys12 participates in [4Fe-4S] cluster binding. Residues His43 and His81 each contribute to the (2E)-4-hydroxy-3-methylbut-2-enyl diphosphate site. Dimethylallyl diphosphate-binding residues include His43 and His81. Isopentenyl diphosphate contacts are provided by His43 and His81. Residue Cys103 participates in [4Fe-4S] cluster binding. His131 contacts (2E)-4-hydroxy-3-methylbut-2-enyl diphosphate. His131 is a binding site for dimethylallyl diphosphate. His131 contributes to the isopentenyl diphosphate binding site. The active-site Proton donor is Glu133. Thr170 is a (2E)-4-hydroxy-3-methylbut-2-enyl diphosphate binding site. Cys198 contributes to the [4Fe-4S] cluster binding site. Residues Ser226, Asn228, and Ser271 each coordinate (2E)-4-hydroxy-3-methylbut-2-enyl diphosphate. Ser226, Asn228, and Ser271 together coordinate dimethylallyl diphosphate. Isopentenyl diphosphate contacts are provided by Ser226, Asn228, and Ser271.

This sequence belongs to the IspH family. Requires [4Fe-4S] cluster as cofactor.

It catalyses the reaction isopentenyl diphosphate + 2 oxidized [2Fe-2S]-[ferredoxin] + H2O = (2E)-4-hydroxy-3-methylbut-2-enyl diphosphate + 2 reduced [2Fe-2S]-[ferredoxin] + 2 H(+). It carries out the reaction dimethylallyl diphosphate + 2 oxidized [2Fe-2S]-[ferredoxin] + H2O = (2E)-4-hydroxy-3-methylbut-2-enyl diphosphate + 2 reduced [2Fe-2S]-[ferredoxin] + 2 H(+). The protein operates within isoprenoid biosynthesis; dimethylallyl diphosphate biosynthesis; dimethylallyl diphosphate from (2E)-4-hydroxy-3-methylbutenyl diphosphate: step 1/1. It functions in the pathway isoprenoid biosynthesis; isopentenyl diphosphate biosynthesis via DXP pathway; isopentenyl diphosphate from 1-deoxy-D-xylulose 5-phosphate: step 6/6. Catalyzes the conversion of 1-hydroxy-2-methyl-2-(E)-butenyl 4-diphosphate (HMBPP) into a mixture of isopentenyl diphosphate (IPP) and dimethylallyl diphosphate (DMAPP). Acts in the terminal step of the DOXP/MEP pathway for isoprenoid precursor biosynthesis. In Brevibacillus brevis (strain 47 / JCM 6285 / NBRC 100599), this protein is 4-hydroxy-3-methylbut-2-enyl diphosphate reductase.